A 233-amino-acid polypeptide reads, in one-letter code: 7-cyano-7-deazaguanine synthase (233 aa).

Residue 7 to 17 participates in ATP binding; it reads CSGGLDSVSLA. Zn(2+)-binding residues include Cys185, Cys193, Cys196, and Cys199.

This sequence belongs to the QueC family. The cofactor is Zn(2+).

The catalysed reaction is 7-carboxy-7-deazaguanine + NH4(+) + ATP = 7-cyano-7-deazaguanine + ADP + phosphate + H2O + H(+). The protein operates within purine metabolism; 7-cyano-7-deazaguanine biosynthesis. Its function is as follows. Catalyzes the ATP-dependent conversion of 7-carboxy-7-deazaguanine (CDG) to 7-cyano-7-deazaguanine (preQ(0)). This Paracoccus denitrificans (strain Pd 1222) protein is 7-cyano-7-deazaguanine synthase.